Reading from the N-terminus, the 304-residue chain is Probable aquaporin NIP5-1 (304 aa).

Helical transmembrane passes span 80–100 (LGAEFVGTFILIFTATAGPIV) and 106–126 (GAETLIGNAACAGLAVMIIIL). The NPA 1 motif lies at 137–139 (NPS). Helical transmembrane passes span 157–177 (AYIAAQVSASICASFALKGVF), 195–215 (AFALEFIITFILLFVVTAVAT), and 219–239 (AVGELAGIAVGATVMLNILVA). The short motif at 248–250 (NPV) is the NPA 2 element. A helical transmembrane segment spans residues 266 to 286 (WVYLVAPTLGAISGAAVYTGV). Position 301 is a phosphoserine (Ser301).

This sequence belongs to the MIP/aquaporin (TC 1.A.8) family. NIP (TC 1.A.8.12) subfamily. In terms of tissue distribution, expressed in rosette leaves.

Its subcellular location is the cell membrane. Its function is as follows. Boric acid transporter. Low water transport activity. Plays an important role as plasma membrane boric acid channel for the boron uptake required for plant growth and development under boron limitation. This Arabidopsis thaliana (Mouse-ear cress) protein is Probable aquaporin NIP5-1 (NIP5-1).